The sequence spans 471 residues: MPTPLILHDDRLLPADPATRAIARRLYAQTAALPIISPHGHTDPAWFATDAPFANATELLLVPDHYVFRMLYSQGIDLDQLGIPHADGSRAPVDPREAWRVFASQFALLRGTPSALWLNHVFHQVFDLRIRLDAGSADHYYDHITAALQTPAFRPRALFERFNIEVIATTESPLDTLEHHATIRDSGWTGRVLTAYRPDAVVDPEHEQFASALQQFAALTGEDVMQWPGYLCAHRQRRAFFAAAGATSTDHGHPSAATADLSPAEAQRLFDTVVRGQATPAQAELFRAQVLTEMAAMSVDDGLVMQLHPGCFRNHNRQLFERYGRDKGADIPMRTDYVHALKPLLDRFGNDPRFRLIVFTLDETSYSRELAPLAGHYPALLLGPAWWFHDAPEGMWRFREQTLASAGFYNTVGFNDDTRAFLSIPARHDVARRVDSAFLAKLVAEHRLDEDEAMEVAIDLAYRLPKQAYKL.

The protein belongs to the metallo-dependent hydrolases superfamily. Uronate isomerase family.

The enzyme catalyses D-glucuronate = D-fructuronate. The catalysed reaction is aldehydo-D-galacturonate = keto-D-tagaturonate. The protein operates within carbohydrate metabolism; pentose and glucuronate interconversion. This Xanthomonas campestris pv. campestris (strain 8004) protein is Uronate isomerase.